The primary structure comprises 23 residues: Defensin D4 (23 aa).

Belongs to the DEFL family. Group IV subfamily. In terms of tissue distribution, distributed in the epidermal cell layer of leaves and in the subepidermal layer region of stems. Not in roots.

The protein resides in the secreted. It is found in the cell wall. Antimicrobial peptide. Active against Fusarium spp., Gram-positive and Gram-negative bacterial pathogens. This Spinacia oleracea (Spinach) protein is Defensin D4.